The chain runs to 1361 residues: MGARRESGLHSFLNRKTPPTADMQQGSGGTRPQPFSRFTYGSKSAQSSGGMGGQVACSPKGRGSQRSLLSSNFPFMESVFEDRTAAPQRTPTPRDERSEYFGEAEGSSGLRSSLQCNRELASLDKINDAQARMVVVAGKSHLGLYKFDEAYRMQQVHDYMTPGSLGGGTKFSSSMRRNMRKISTISDVKAGFHHHKNYIAICGTSTSVSIYDINRASAKDSPLITTLSEHSRSINSVDFNMGQTHLLISGGQDGCIKVWDLRSHSYKVNRSDLNFNSGSDSVRDVKWMPTYDFASLGADTSLCSSGRSNKFASVHDSGLLLTFDMRQPNQVERKINAHSGPGLCMHWHPHMDYIISGGRDGKCALWYVGDKVNSMVSVPQGHNSATSYSINTAPITTGYLETVINTSHPVSKLKFRPKYVHNMLNSLIATSSMGEDSDVTIYSLARKHIPQNILTTAAPSLGFVWWNEDIVFNIDKQSVISAWDIRYEPTLLDNLPKGIVKWRDMDGSGLVFVAQEKGTYSMDNGGVTDSVGKGAANRMSNTTLNSTNNMGRDQEVFTYSFQQQYKHQDQEAADRESDHDKELEKERETEVDQHYHYLREQEREHHQEYQEWEHEPFGRHDDHQGNPQTDFYSHAYSDRPMLSKALSTYSSKIASPILSYYGAQTLSHHTSIVSNSPSISGAALEYPGGIESPIMITLDLPQVFGSVRASRLADRKTSKNKGNAPAVRESAVDIFKYLVRELELCHVQERNDPKSISVDDRSKSLDDTELKIQLMENIGLSEHNTWATLIRSTTSMDTNDPAGSHTQGHSKLVDMVKLQGSNILSPDNSDMEDDLGDKLDEMGTARLQENVNHLVGLIFLSTHNAETYASVNDLQNFKIWMLIRDSLLNDLKEAADGSTGRRDASGGAANSDKNGIYTTTSTVNHARQDSITSNFSSFEPSDISRSDGEEKLNLGRLSEQNLKATNQNTTAKLDDTRKLASSSSLNSSEPLLLLEGGNQAKEQSIGLSDLKTCLKERYTASNESVLDIEEESSATVAYSSKQANTECSSSIPIRKTEARTSFIDTIMTNLRSPGLSHLDVDNDAIFGKGKTSTSLGSGASKRSSMHSTDSYHKRPYSSPITYSKITTAAQKAKLGLADHDGLPNRGSISFLANIDAAHADKLLLGKLGLASSPDDGKLLPPWDTGRLIQQLYRYSVETGNIILTVCIILLFQTMYKVTSTRIVKSTLAEFITILHRYEMFEISAHLLKNCPWDDILGAGSGQSTVRLFCENCGKLIVNEHSKTILSKRHQAGESNMTNFGYWYCDSCRKPNSLCVYCEQPMKKLALSFLNCGHGGHFECLQQWFLDEGMSECPSGCSGVLL.

The interval 1–104 (MGARRESGLH…DERSEYFGEA (104 aa)) is disordered. Polar residues-rich tracts occupy residues 39-48 (TYGSKSAQSS) and 64-73 (SQRSLLSSNF). WD repeat units lie at residues 180-221 (RKIS…AKDS), 229-269 (EHSR…YKVN), 277-315 (SGSD…ASVH), 337-376 (AHSG…NSMV), 405-452 (NTSH…IPQN), and 455-493 (TTAA…TLLD). The segment at 564-593 (QYKHQDQEAADRESDHDKELEKERETEVDQ) is disordered. The span at 566–593 (KHQDQEAADRESDHDKELEKERETEVDQ) shows a compositional bias: basic and acidic residues. The WD 7 repeat unit spans residues 849–890 (ENVNHLVGLIFLSTHNAETYASVNDLQNFKIWMLIRDSLLND). Disordered stretches follow at residues 896-916 (DGST…KNGI), 953-982 (NLGR…LASS), and 1091-1113 (TSTS…SYHK). Positions 958–971 (SEQNLKATNQNTTA) are enriched in polar residues. A compositionally biased stretch (low complexity) spans 1091 to 1101 (TSTSLGSGASK). 2 WD repeats span residues 1146 to 1192 (GSIS…QQLY) and 1240 to 1278 (FEIS…LIVN). The segment at 1314-1356 (CVYCEQPMKKLALSFLNCGHGGHFECLQQWFLDEGMSECPSGC) adopts an RING-type; degenerate zinc-finger fold.

This sequence belongs to the WD repeat RTC1 family.

Its subcellular location is the vacuole. Its function is as follows. May be involved in a process influencing telomere capping. The chain is Restriction of telomere capping protein 1 (RTC1) from Eremothecium gossypii (strain ATCC 10895 / CBS 109.51 / FGSC 9923 / NRRL Y-1056) (Yeast).